We begin with the raw amino-acid sequence, 231 residues long: 5'-methylthioadenosine/S-adenosylhomocysteine nucleosidase (231 aa).

Catalysis depends on Glu12, which acts as the Proton acceptor. Substrate-binding positions include Gly78, Met153, and 174–175; that span reads ME. Catalysis depends on Asp198, which acts as the Proton donor.

This sequence belongs to the PNP/UDP phosphorylase family. MtnN subfamily.

The catalysed reaction is S-adenosyl-L-homocysteine + H2O = S-(5-deoxy-D-ribos-5-yl)-L-homocysteine + adenine. The enzyme catalyses S-methyl-5'-thioadenosine + H2O = 5-(methylsulfanyl)-D-ribose + adenine. It carries out the reaction 5'-deoxyadenosine + H2O = 5-deoxy-D-ribose + adenine. Its pathway is amino-acid biosynthesis; L-methionine biosynthesis via salvage pathway; S-methyl-5-thio-alpha-D-ribose 1-phosphate from S-methyl-5'-thioadenosine (hydrolase route): step 1/2. Its function is as follows. Catalyzes the irreversible cleavage of the glycosidic bond in both 5'-methylthioadenosine (MTA) and S-adenosylhomocysteine (SAH/AdoHcy) to adenine and the corresponding thioribose, 5'-methylthioribose and S-ribosylhomocysteine, respectively. Also cleaves 5'-deoxyadenosine, a toxic by-product of radical S-adenosylmethionine (SAM) enzymes, into 5-deoxyribose and adenine. The chain is 5'-methylthioadenosine/S-adenosylhomocysteine nucleosidase from Bacillus subtilis (strain 168).